The primary structure comprises 170 residues: Peptide deformylase (170 aa).

Fe cation is bound by residues C91 and H133. E134 is a catalytic residue. Fe cation is bound at residue H137.

This sequence belongs to the polypeptide deformylase family. The cofactor is Fe(2+).

It carries out the reaction N-terminal N-formyl-L-methionyl-[peptide] + H2O = N-terminal L-methionyl-[peptide] + formate. Functionally, removes the formyl group from the N-terminal Met of newly synthesized proteins. Requires at least a dipeptide for an efficient rate of reaction. N-terminal L-methionine is a prerequisite for activity but the enzyme has broad specificity at other positions. The polypeptide is Peptide deformylase (Pectobacterium carotovorum subsp. carotovorum (strain PC1)).